We begin with the raw amino-acid sequence, 1710 residues long: Neurexin-2 (1710 aa).

The N-terminal stretch at 1 to 28 (MALGSRWQPPPQLPPLLLLLALAAGVRG) is a signal peptide. The Laminin G-like 1 domain maps to 29-206 (LEFGGGPGQW…LRGAAADPLC (178 aa)). Residues 29-1634 (LEFGGGPGQW…EVIRESSSTT (1606 aa)) lie on the Extracellular side of the membrane. A glycan (N-linked (GlcNAc...) asparagine) is linked at asparagine 60. Residues 202–242 (ADPLCAPARNPCANGGLCTVLAPGEVGCDCSHTGFGGKFCS) form the EGF-like 1 domain. 3 disulfide bridges follow: cysteine 206–cysteine 219, cysteine 213–cysteine 229, and cysteine 231–cysteine 241. Laminin G-like domains are found at residues 289–486 (VATF…SFRC) and 493–686 (DPVT…APFC). Residue aspartate 335 participates in Ca(2+) binding. Asparagine 338 is a glycosylation site (N-linked (GlcNAc...) asparagine). Ca(2+)-binding residues include leucine 352 and methionine 420. 5 cysteine pairs are disulfide-bonded: cysteine 450-cysteine 486, cysteine 657-cysteine 686, cysteine 694-cysteine 705, cysteine 699-cysteine 714, and cysteine 716-cysteine 726. Residues 690–727 (TLKQCASAPCRNGGICREGWNRFVCDCIGTGFLGRVCE) form the EGF-like 2 domain. 2 consecutive Laminin G-like domains span residues 732–904 (VLSY…ITYC) and 918–1093 (DPVT…ERGC). 2 residues coordinate Ca(2+): aspartate 779 and leucine 796. N-linked (GlcNAc...) asparagine glycosylation occurs at asparagine 841. Arginine 854 serves as a coordination point for Ca(2+). Intrachain disulfides connect cysteine 1065-cysteine 1093, cysteine 1100-cysteine 1111, cysteine 1105-cysteine 1120, and cysteine 1122-cysteine 1132. The EGF-like 3 domain occupies 1096–1133 (PSTTCTEESCANQGVCLQQWDGFTCDCTMTSYGGPVCN). Residues 1137-1345 (TTYIFGKGGA…HLRLVGEGPS (209 aa)) form the Laminin G-like 6 domain. Residues aspartate 1189, valine 1206, isoleucine 1288, and asparagine 1290 each contribute to the Ca(2+) site. Residue serine 1400 is glycosylated (O-linked (Xyl...) (heparan sulfate) serine). Disordered regions lie at residues 1458-1508 (ATQD…LPPT) and 1587-1621 (EPRR…RGPP). The helical transmembrane segment at 1635-1655 (GMVVGIVAAAALCILILLYAM) threads the bilayer. Residues 1656–1710 (YKYRNRDEGSYQVDQSRNYISNSAQSNGAVVKEKAPAAPKTPSKAKKNKDKEYYV) are Cytoplasmic-facing. The interval 1677–1710 (NSAQSNGAVVKEKAPAAPKTPSKAKKNKDKEYYV) is disordered.

In terms of assembly, the laminin G-like domain 1 binds to NXPH1. Interacts with PATJ. Interacts with CBLN1, CBLN2 and, less avidly, with CBLN4. Specific isoforms bind neuroligins NLGN1, NLGN2 and NLGN3. Specific isoforms bind to alpha-dystroglycan. Interacts (via Laminin G-like 1 domain) with IGSF21 (Ig-like 1 domain) in a trans-interaction manner. Interacts with CLSTN3. Post-translationally, O-glycosylated; contains heparan sulfate. Heparan sulfate attachment is required for synapse development by mediating interactions with neuroligins.

Its subcellular location is the presynaptic cell membrane. Its function is as follows. Neuronal cell surface protein that may be involved in cell recognition and cell adhesion. May mediate intracellular signaling. The chain is Neurexin-2 from Mus musculus (Mouse).